Reading from the N-terminus, the 985-residue chain is Guanine nucleotide exchange protein smcr8b (985 aa).

Residues 47-225 form the uDENN FLCN/SMCR8-type domain; sequence ISSAKLKKDF…VKCSSEREPI (179 aa). Basic and acidic residues predominate over residues 242–292; that stretch reads NEKSSHTDEISPQEKDGCGNSRKVEVKLENENRSHFEHEQYGKQRKDKPDK. Disordered regions lie at residues 242 to 301, 502 to 528, and 639 to 659; these read NEKS…PLAN, QSQV…SPAE, and EESP…EDNN. One can recognise a cDENN FLCN/SMCR8-type domain in the interval 390-895; it reads RLKTLEELCD…LINLLVEPKS (506 aa). Over residues 502–514 the composition is skewed to polar residues; it reads QSQVQHSTLNTPS. The dDENN FLCN/SMCR8-type domain maps to 904 to 962; it reads FTFAQSVQSKLVTKAFLLTFSHGHPSPSRPQGSSGTECFLSELHTDDKKILRYLSELIK.

It belongs to the SMCR8 family. In terms of assembly, component of the C9orf72-SMCR8 complex. The C9orf72-SMCR8 complex associates with the ATG1/ULK1 kinase complex.

Its subcellular location is the cytoplasm. It localises to the nucleus. Its function is as follows. Component of the C9orf72-SMCR8 complex, a complex that has guanine nucleotide exchange factor (GEF) activity and regulates autophagy. In the complex, C9orf72 and SMCR8 probably constitute the catalytic subunits that promote the exchange of GDP to GTP, converting inactive GDP-bound RAB8A and RAB39B into their active GTP-bound form, thereby promoting autophagosome maturation. The C9orf72-SMCR8 complex also acts as a negative regulator of autophagy initiation by interacting with the ATG1/ULK1 kinase complex and inhibiting its protein kinase activity. This is Guanine nucleotide exchange protein smcr8b (smcr8b) from Danio rerio (Zebrafish).